Consider the following 736-residue polypeptide: 1,4-alpha-glucan branching enzyme GlgB (736 aa).

D415 acts as the Nucleophile in catalysis. E470 serves as the catalytic Proton donor.

Belongs to the glycosyl hydrolase 13 family. GlgB subfamily. In terms of assembly, monomer.

It catalyses the reaction Transfers a segment of a (1-&gt;4)-alpha-D-glucan chain to a primary hydroxy group in a similar glucan chain.. The protein operates within glycan biosynthesis; glycogen biosynthesis. Catalyzes the formation of the alpha-1,6-glucosidic linkages in glycogen by scission of a 1,4-alpha-linked oligosaccharide from growing alpha-1,4-glucan chains and the subsequent attachment of the oligosaccharide to the alpha-1,6 position. The polypeptide is 1,4-alpha-glucan branching enzyme GlgB (Burkholderia cenocepacia (strain HI2424)).